Reading from the N-terminus, the 509-residue chain is Poly(A) RNA polymerase GLD2-A (509 aa).

A disordered region spans residues 88 to 107 (PGSPSSSFQNRKRRSDEGNV). The Mg(2+) site is built by Asp240 and Asp242. Positions 409-462 (LGDLLLGFLKYFAVEFDWSKDIISVREGKALPRSDDYLWRNKYICVEEPFDGTN) constitute a PAP-associated domain.

Belongs to the DNA polymerase type-B-like family. GLD2 subfamily. As to quaternary structure, component of a complex at least composed of cpeb1, cpsf1, tent2/gld2, pabpc1/ePAB, parn and sympk. Following oocyte maturation, parn is expelled from the complex. Interacts with rbfox2 and sympk. Mg(2+) is required as a cofactor. The cofactor is Mn(2+).

The protein resides in the cytoplasm. It carries out the reaction RNA(n) + ATP = RNA(n)-3'-adenine ribonucleotide + diphosphate. Functionally, cytoplasmic poly(A) RNA polymerase that adds successive AMP monomers to the 3'-end of specific RNAs, forming a poly(A) tail. In contrast to the canonical nuclear poly(A) RNA polymerase, it only adds poly(A) to selected cytoplasmic mRNAs during oocyte maturation. Plays a central role during oocyte maturation by mediating polyadenylation of dormant mRNAs, which contain 5'AAUAAA-3' sequence in their 3'UTR. In immature oocytes, polyadenylation of poly(A) tails is counteracted by the ribonuclease parn. During maturation parn is excluded from the ribonucleoprotein complex, allowing poly(A) elongation and activation of mRNAs. May not play a role in replication-dependent histone mRNA degradation. The sequence is that of Poly(A) RNA polymerase GLD2-A (tent2-a) from Xenopus laevis (African clawed frog).